A 301-amino-acid chain; its full sequence is Acetylglutamate kinase (301 aa).

Substrate-binding positions include 70 to 71 (GG), Arg92, and Asn185.

It belongs to the acetylglutamate kinase family. ArgB subfamily.

The protein localises to the cytoplasm. The catalysed reaction is N-acetyl-L-glutamate + ATP = N-acetyl-L-glutamyl 5-phosphate + ADP. Its pathway is amino-acid biosynthesis; L-arginine biosynthesis; N(2)-acetyl-L-ornithine from L-glutamate: step 2/4. Its function is as follows. Catalyzes the ATP-dependent phosphorylation of N-acetyl-L-glutamate. This is Acetylglutamate kinase from Synechococcus elongatus (strain ATCC 33912 / PCC 7942 / FACHB-805) (Anacystis nidulans R2).